Here is a 246-residue protein sequence, read N- to C-terminus: Heavy metal-associated isoprenylated plant protein 8 (246 aa).

A disordered region spans residues 1 to 31; the sequence is MGKNKQNGESDNKSEKKNQKNGDSSVDKSDK. The region spanning 35-99 is the HMA 1 domain; sequence CKEIVLKVYM…RVQKKFSRNA (65 aa). Cys46 and Cys49 together coordinate a metal cation. A disordered region spans residues 96-122; the sequence is SRNAEMISPKHNPKQDQKEPQQKKESA. Residues 108–122 show a composition bias toward basic and acidic residues; it reads PKQDQKEPQQKKESA. The region spanning 125–189 is the HMA 2 domain; it reads IKTAILRMNM…IKKKLGKHAE (65 aa). Positions 136 and 139 each coordinate a metal cation. The disordered stretch occupies residues 191–226; it reads LSQITEKGKDNNKKNNNKKEESDGNKIFSYPPQYSS. Residues 196 to 214 are compositionally biased toward basic and acidic residues; the sequence is EKGKDNNKKNNNKKEESDG. Position 243 is a cysteine methyl ester (Cys243). A lipid anchor (S-farnesyl cysteine) is attached at Cys243. A propeptide spans 244 to 246 (removed in mature form); that stretch reads SIM.

The protein belongs to the HIPP family.

Heavy-metal-binding protein. The sequence is that of Heavy metal-associated isoprenylated plant protein 8 from Arabidopsis thaliana (Mouse-ear cress).